Reading from the N-terminus, the 224-residue chain is MRLRNNANAPLYLKSQHEYIINDPHLLKDNLGKIFKNPELPLYIEIGMGKGDFIIENALRNQQINYLGIEKFPTVIVKAHKKALKHKLDNLAMICFDANKILELLNSESVDKIYLNFSDPWPKKRHAKKRLTHPCFLEKFAVILKQNALVEFKTDNENLFMYTIYDVLLKDLTKYEILFLTYNLYTLVNNVELLKNIPTEYEKKFVMQGERIKKVNFRFLKNNQ.

Residues Glu-45, Glu-70, Asp-97, and Asp-119 each coordinate S-adenosyl-L-methionine. Residue Asp-119 is part of the active site. Substrate is bound by residues Lys-123, Asp-155, and 199–202 (TEYE).

This sequence belongs to the class I-like SAM-binding methyltransferase superfamily. TrmB family.

It carries out the reaction guanosine(46) in tRNA + S-adenosyl-L-methionine = N(7)-methylguanosine(46) in tRNA + S-adenosyl-L-homocysteine. It functions in the pathway tRNA modification; N(7)-methylguanine-tRNA biosynthesis. Catalyzes the formation of N(7)-methylguanine at position 46 (m7G46) in tRNA. In Ureaplasma parvum serovar 3 (strain ATCC 27815 / 27 / NCTC 11736), this protein is tRNA (guanine-N(7)-)-methyltransferase.